A 180-amino-acid polypeptide reads, in one-letter code: CDP-archaeol synthase (180 aa).

5 consecutive transmembrane segments (helical) span residues 5 to 25 (LVATAFWAMLPAYVPNNAAVL), 54 to 74 (AVGTLTGVVLALALNRIAEPA), 78 to 98 (LGVDLPTFALPAAFALAFGAM), 118 to 138 (AFPGLDQLDFVVVALAAVFVV), and 142 to 162 (WALAVFTPSVLVVVLVMTPIL).

The protein belongs to the CDP-archaeol synthase family. Requires Mg(2+) as cofactor.

The protein resides in the cell membrane. It carries out the reaction 2,3-bis-O-(geranylgeranyl)-sn-glycerol 1-phosphate + CTP + H(+) = CDP-2,3-bis-O-(geranylgeranyl)-sn-glycerol + diphosphate. It participates in membrane lipid metabolism; glycerophospholipid metabolism. Its function is as follows. Catalyzes the formation of CDP-2,3-bis-(O-geranylgeranyl)-sn-glycerol (CDP-archaeol) from 2,3-bis-(O-geranylgeranyl)-sn-glycerol 1-phosphate (DGGGP) and CTP. This reaction is the third ether-bond-formation step in the biosynthesis of archaeal membrane lipids. The sequence is that of CDP-archaeol synthase from Halorubrum lacusprofundi (strain ATCC 49239 / DSM 5036 / JCM 8891 / ACAM 34).